We begin with the raw amino-acid sequence, 290 residues long: Ribosomal RNA small subunit methyltransferase A (290 aa).

S-adenosyl-L-methionine-binding residues include Asn-27, Leu-29, Gly-54, Glu-75, Asp-100, and Asn-125.

The protein belongs to the class I-like SAM-binding methyltransferase superfamily. rRNA adenine N(6)-methyltransferase family. RsmA subfamily.

It localises to the cytoplasm. The catalysed reaction is adenosine(1518)/adenosine(1519) in 16S rRNA + 4 S-adenosyl-L-methionine = N(6)-dimethyladenosine(1518)/N(6)-dimethyladenosine(1519) in 16S rRNA + 4 S-adenosyl-L-homocysteine + 4 H(+). Its function is as follows. Specifically dimethylates two adjacent adenosines (A1518 and A1519) in the loop of a conserved hairpin near the 3'-end of 16S rRNA in the 30S particle. May play a critical role in biogenesis of 30S subunits. This Streptococcus pyogenes serotype M1 protein is Ribosomal RNA small subunit methyltransferase A.